Reading from the N-terminus, the 333-residue chain is Fructose-1,6-bisphosphatase class 1 (333 aa).

Positions 92, 113, 115, and 116 each coordinate Mg(2+). Residues 116–119 (DGSS), N209, Y242, and K272 each bind substrate. E278 provides a ligand contact to Mg(2+).

It belongs to the FBPase class 1 family. As to quaternary structure, homotetramer. It depends on Mg(2+) as a cofactor.

Its subcellular location is the cytoplasm. It catalyses the reaction beta-D-fructose 1,6-bisphosphate + H2O = beta-D-fructose 6-phosphate + phosphate. It participates in carbohydrate biosynthesis; Calvin cycle. The protein is Fructose-1,6-bisphosphatase class 1 of Chlorobium chlorochromatii (strain CaD3).